The chain runs to 148 residues: Putative pre-16S rRNA nuclease (148 aa).

The protein belongs to the YqgF nuclease family.

It localises to the cytoplasm. Its function is as follows. Could be a nuclease involved in processing of the 5'-end of pre-16S rRNA. The chain is Putative pre-16S rRNA nuclease from Chlamydia trachomatis serovar A (strain ATCC VR-571B / DSM 19440 / HAR-13).